A 244-amino-acid polypeptide reads, in one-letter code: uncharacterized protein (244 aa).

2 helical membrane-spanning segments follow: residues 29 to 49 (WIPW…TQHM) and 139 to 159 (LGMK…ATVI).

This sequence belongs to the FMP10 family.

It localises to the mitochondrion membrane. This is an uncharacterized protein from Saccharomyces cerevisiae (strain ATCC 204508 / S288c) (Baker's yeast).